The following is a 264-amino-acid chain: 3'-5' ssDNA/RNA exonuclease TatD (264 aa).

3 residues coordinate a divalent metal cation: glutamate 92, histidine 128, and histidine 153.

This sequence belongs to the metallo-dependent hydrolases superfamily. TatD-type hydrolase family. TatD subfamily. As to quaternary structure, monomer. Requires Mg(2+) as cofactor.

The protein localises to the cytoplasm. In terms of biological role, 3'-5' exonuclease that prefers single-stranded DNA and RNA. May play a role in the H(2)O(2)-induced DNA damage repair. The chain is 3'-5' ssDNA/RNA exonuclease TatD from Dickeya dadantii (strain 3937) (Erwinia chrysanthemi (strain 3937)).